Here is a 153-residue protein sequence, read N- to C-terminus: Transmembrane inner ear expressed protein (153 aa).

The first 28 residues, 1–28 (MAGRQHGSGRLWALGGAALGACLAGVAT), serve as a signal peptide directing secretion. At 29-58 (QLVEPSTAPPKPKPPPLTKETVVFWDMRLW) the chain is on the extracellular side. Residues 59 to 79 (HVVGIFSLFVLSIIITLCCVF) form a helical membrane-spanning segment. The Cytoplasmic portion of the chain corresponds to 80–153 (NCRVPRTRKE…KNEAKKKGEK (74 aa)).

In terms of assembly, forms the MET channel composed of TMC (TMC1 or TMC2), TMIE, TOMT, CIB (CIB2 or CIB3), LHPL5 and PCDH15. Expressed in brain, kidney, liver, lung and cochlea.

Its subcellular location is the membrane. In terms of biological role, auxiliary subunit of the mechanotransducer (MET) non-specific cation channel complex located at the tips of stereocilia of cochlear hair cells and that mediates sensory transduction in the auditory system. The MET complex is composed of two dimeric pore-forming ion-conducting transmembrane TMC (TMC1 or TMC2) subunits, and aided by several auxiliary proteins including LHFPL5, TMIE, CIB2/3 and TOMT, and the tip-link PCDH15. May contribute to the formation of the pore. This is Transmembrane inner ear expressed protein (Tmie) from Mus musculus (Mouse).